The sequence spans 77 residues: Large ribosomal subunit protein bL28 (77 aa).

It belongs to the bacterial ribosomal protein bL28 family.

This is Large ribosomal subunit protein bL28 from Variovorax paradoxus (strain S110).